A 684-amino-acid chain; its full sequence is Acetyl-coenzyme A synthetase 2 (684 aa).

Residues arginine 207–lysine 210 and threonine 326 each bind CoA. ATP-binding positions include glycine 402 to proline 404, aspartate 426 to threonine 431, aspartate 517, and arginine 532. Serine 540 serves as a coordination point for CoA. Arginine 543 is a binding site for ATP. A CoA-binding site is contributed by arginine 613.

The protein belongs to the ATP-dependent AMP-binding enzyme family.

It carries out the reaction acetate + ATP + CoA = acetyl-CoA + AMP + diphosphate. This chain is Acetyl-coenzyme A synthetase 2 (ACS2), found in Kluyveromyces lactis (strain ATCC 8585 / CBS 2359 / DSM 70799 / NBRC 1267 / NRRL Y-1140 / WM37) (Yeast).